Reading from the N-terminus, the 331-residue chain is Probable protein phosphatase 2C 1 (331 aa).

Positions 1 to 29 are disordered; the sequence is MAASSTATRLSPPRLHAPTTPSPHLPLRR. A PPM-type phosphatase domain is found at 48–292; it reads THLIPHPRKA…DDITVIVAQV (245 aa). Residues aspartate 79, glycine 80, aspartate 210, and aspartate 283 each coordinate Mn(2+). The segment at 300-331 is disordered; sequence DEGVDEEKGQGDEQGSAVAVASSEQKEDSITT.

This sequence belongs to the PP2C family. Mg(2+) serves as cofactor. The cofactor is Mn(2+).

It carries out the reaction O-phospho-L-seryl-[protein] + H2O = L-seryl-[protein] + phosphate. The enzyme catalyses O-phospho-L-threonyl-[protein] + H2O = L-threonyl-[protein] + phosphate. The polypeptide is Probable protein phosphatase 2C 1 (Oryza sativa subsp. japonica (Rice)).